A 1368-amino-acid polypeptide reads, in one-letter code: DNA-directed RNA polymerase subunit beta (1368 aa).

Belongs to the RNA polymerase beta chain family. In terms of assembly, the RNAP catalytic core consists of 2 alpha, 1 beta, 1 beta' and 1 omega subunit. When a sigma factor is associated with the core the holoenzyme is formed, which can initiate transcription.

It catalyses the reaction RNA(n) + a ribonucleoside 5'-triphosphate = RNA(n+1) + diphosphate. Its function is as follows. DNA-dependent RNA polymerase catalyzes the transcription of DNA into RNA using the four ribonucleoside triphosphates as substrates. This Burkholderia cenocepacia (strain ATCC BAA-245 / DSM 16553 / LMG 16656 / NCTC 13227 / J2315 / CF5610) (Burkholderia cepacia (strain J2315)) protein is DNA-directed RNA polymerase subunit beta.